The following is a 513-amino-acid chain: ATP synthase subunit alpha (513 aa).

ATP is bound at residue 169–176 (GDRQTGKT).

The protein belongs to the ATPase alpha/beta chains family. As to quaternary structure, F-type ATPases have 2 components, CF(1) - the catalytic core - and CF(0) - the membrane proton channel. CF(1) has five subunits: alpha(3), beta(3), gamma(1), delta(1), epsilon(1). CF(0) has three main subunits: a(1), b(2) and c(9-12). The alpha and beta chains form an alternating ring which encloses part of the gamma chain. CF(1) is attached to CF(0) by a central stalk formed by the gamma and epsilon chains, while a peripheral stalk is formed by the delta and b chains.

The protein localises to the cell inner membrane. It catalyses the reaction ATP + H2O + 4 H(+)(in) = ADP + phosphate + 5 H(+)(out). In terms of biological role, produces ATP from ADP in the presence of a proton gradient across the membrane. The alpha chain is a regulatory subunit. The protein is ATP synthase subunit alpha of Haemophilus ducreyi (strain 35000HP / ATCC 700724).